A 364-amino-acid polypeptide reads, in one-letter code: tRNA-specific 2-thiouridylase MnmA 1 (364 aa).

Residues 11 to 18 (GMSGGTDS) and F37 each bind ATP. The active-site Nucleophile is the C96. C96 and C193 are oxidised to a cystine. Residue G120 participates in ATP binding. The segment at 142-144 (KDQ) is interaction with tRNA. The active-site Cysteine persulfide intermediate is C193. The interaction with tRNA stretch occupies residues 309-310 (RY).

It belongs to the MnmA/TRMU family.

The protein localises to the cytoplasm. It carries out the reaction S-sulfanyl-L-cysteinyl-[protein] + uridine(34) in tRNA + AH2 + ATP = 2-thiouridine(34) in tRNA + L-cysteinyl-[protein] + A + AMP + diphosphate + H(+). Its function is as follows. Catalyzes the 2-thiolation of uridine at the wobble position (U34) of tRNA, leading to the formation of s(2)U34. This Bacteroides fragilis (strain ATCC 25285 / DSM 2151 / CCUG 4856 / JCM 11019 / LMG 10263 / NCTC 9343 / Onslow / VPI 2553 / EN-2) protein is tRNA-specific 2-thiouridylase MnmA 1.